We begin with the raw amino-acid sequence, 320 residues long: o-succinylbenzoate synthase (320 aa).

K133 serves as the catalytic Proton donor. Mg(2+) is bound by residues D161, E190, and D213. K235 (proton acceptor) is an active-site residue.

The protein belongs to the mandelate racemase/muconate lactonizing enzyme family. MenC type 1 subfamily. A divalent metal cation is required as a cofactor.

The enzyme catalyses (1R,6R)-6-hydroxy-2-succinyl-cyclohexa-2,4-diene-1-carboxylate = 2-succinylbenzoate + H2O. Its pathway is quinol/quinone metabolism; 1,4-dihydroxy-2-naphthoate biosynthesis; 1,4-dihydroxy-2-naphthoate from chorismate: step 4/7. It functions in the pathway quinol/quinone metabolism; menaquinone biosynthesis. Functionally, converts 2-succinyl-6-hydroxy-2,4-cyclohexadiene-1-carboxylate (SHCHC) to 2-succinylbenzoate (OSB). This chain is o-succinylbenzoate synthase, found in Salmonella paratyphi C (strain RKS4594).